The sequence spans 974 residues: Protein bicaudal C homolog 1 (974 aa).

Positions 1 to 50 (MAAQGEPGYLAAQSDPGSNSERSTDSPVPGSEDDLVAGATLHSPEWSEER) are disordered. A phosphoserine mark is found at S26, S31, and S43. 2 KH domains span residues 132–199 (RVTL…RVRI) and 284–348 (PVST…RQYL). K398 carries the post-translational modification N6-acetyllysine. Phosphoserine occurs at positions 576, 612, and 679. 3 disordered regions span residues 593–644 (VLSA…GDLK), 665–719 (GTKN…HLAP), and 783–846 (YKPT…KSTE). Residues 602 to 619 (SIQTSGSEQTSPKSSPTE) show a composition bias toward polar residues. Residues 690–703 (LADKKAPGSERAAE) show a composition bias toward basic and acidic residues. The region spanning 873–936 (FKGSDLPELF…LLAISELNKN (64 aa)) is the SAM domain.

This sequence belongs to the BicC family. In terms of assembly, interacts (via KH domains) with ANKS6 (via SAM domain) in an RNA-dependent manner. Interacts with ANKS3.

Its subcellular location is the cytoplasm. Functionally, putative RNA-binding protein. Acts as a negative regulator of Wnt signaling. May be involved in regulating gene expression during embryonic development. The sequence is that of Protein bicaudal C homolog 1 (BICC1) from Homo sapiens (Human).